The chain runs to 245 residues: Zinc import ATP-binding protein ZnuC (245 aa).

The region spanning 27–244 is the ABC transporter domain; that stretch reads LTADSLTLFY…AKFLSVFPNN (218 aa). 59 to 66 contacts ATP; it reads GPNGGGKT.

This sequence belongs to the ABC transporter superfamily. Zinc importer (TC 3.A.1.15.5) family. The complex is composed of two ATP-binding proteins (ZnuC), two transmembrane proteins (ZnuB) and a solute-binding protein (ZnuA).

It is found in the cell inner membrane. It catalyses the reaction Zn(2+)(out) + ATP(in) + H2O(in) = Zn(2+)(in) + ADP(in) + phosphate(in) + H(+)(in). Its function is as follows. Part of the ABC transporter complex ZnuABC involved in zinc import. Responsible for energy coupling to the transport system. This chain is Zinc import ATP-binding protein ZnuC, found in Anaplasma marginale (strain St. Maries).